The following is a 685-amino-acid chain: ATP-dependent zinc metalloprotease FTSH 8, chloroplastic (685 aa).

Residues Met-1 to Lys-37 constitute a chloroplast transit peptide. The N-terminal 36 residues, Ala-38–Ala-73, are a transit peptide targeting the thylakoid. The Lumenal, thylakoid segment spans residues Ala-38–Pro-161. A helical membrane pass occupies residues Ile-162–Leu-182. Topologically, residues Ser-183–Val-685 are stromal. An ATP-binding site is contributed by Gly-260–Thr-267. Zn(2+) is bound at residue His-481. Glu-482 is an active-site residue. 2 residues coordinate Zn(2+): His-485 and Asp-559.

It in the N-terminal section; belongs to the AAA ATPase family. This sequence in the C-terminal section; belongs to the peptidase M41 family. As to quaternary structure, heterohexamers with FTSH1, FTSH2 and FTSH5. May also form homooligomers. The cofactor is Zn(2+). As to expression, expressed in cotyledons, cauline and rosette leaves, stems, sepals, flovers and siliques. Very low in roots.

Its subcellular location is the plastid. The protein localises to the chloroplast thylakoid membrane. Its function is as follows. Part of a complex that function as an ATP-dependent zinc metallopeptidase. Involved in the thylakoid formation and in the removal of damaged D1 in the photosystem II, preventing cell death under high-intensity light conditions. This is ATP-dependent zinc metalloprotease FTSH 8, chloroplastic (FTSH8) from Arabidopsis thaliana (Mouse-ear cress).